The following is a 118-amino-acid chain: Large ribosomal subunit protein bL19 (118 aa).

The protein belongs to the bacterial ribosomal protein bL19 family.

Functionally, this protein is located at the 30S-50S ribosomal subunit interface and may play a role in the structure and function of the aminoacyl-tRNA binding site. The polypeptide is Large ribosomal subunit protein bL19 (Helicobacter acinonychis (strain Sheeba)).